The following is a 1045-amino-acid chain: DNA polymerase (1045 aa).

Positions 331–355 are disordered; sequence IKENEESDSESDNDDEEDKKENDGA. Acidic residues predominate over residues 335-348; the sequence is EESDSESDNDDEED.

Belongs to the DNA polymerase type-B family.

It catalyses the reaction DNA(n) + a 2'-deoxyribonucleoside 5'-triphosphate = DNA(n+1) + diphosphate. In Phaeocystis pouchetii (PpV01), this protein is DNA polymerase (dpo).